The chain runs to 325 residues: Beta-ketoacyl-[acyl-carrier-protein] synthase III (325 aa).

Residues Cys112 and His250 contribute to the active site. Positions 251–255 are ACP-binding; the sequence is QANIR. The active site involves Asn280.

Belongs to the thiolase-like superfamily. FabH family. Homodimer.

The protein localises to the cytoplasm. The catalysed reaction is malonyl-[ACP] + acetyl-CoA + H(+) = 3-oxobutanoyl-[ACP] + CO2 + CoA. The protein operates within lipid metabolism; fatty acid biosynthesis. Functionally, catalyzes the condensation reaction of fatty acid synthesis by the addition to an acyl acceptor of two carbons from malonyl-ACP. Catalyzes the first condensation reaction which initiates fatty acid synthesis and may therefore play a role in governing the total rate of fatty acid production. Possesses both acetoacetyl-ACP synthase and acetyl transacylase activities. Its substrate specificity determines the biosynthesis of branched-chain and/or straight-chain of fatty acids. The chain is Beta-ketoacyl-[acyl-carrier-protein] synthase III from Clostridium acetobutylicum (strain ATCC 824 / DSM 792 / JCM 1419 / IAM 19013 / LMG 5710 / NBRC 13948 / NRRL B-527 / VKM B-1787 / 2291 / W).